The sequence spans 67 residues: Large ribosomal subunit protein uL29 (67 aa).

The protein belongs to the universal ribosomal protein uL29 family.

This Ruminiclostridium cellulolyticum (strain ATCC 35319 / DSM 5812 / JCM 6584 / H10) (Clostridium cellulolyticum) protein is Large ribosomal subunit protein uL29.